The primary structure comprises 210 residues: HTH-type transcriptional repressor FabR (210 aa).

The HTH tetR-type domain maps to 10-70 (KTRRSLVEAA…TMVDESGLML (61 aa)). The H-T-H motif DNA-binding region spans 33–52 (SLREVAREAGIAPTSFYRHF).

In terms of assembly, homodimer.

The protein localises to the cytoplasm. Its function is as follows. Represses the transcription of fabB, involved in unsaturated fatty acid (UFA) biosynthesis. By controlling UFA production, FabR directly influences the physical properties of the membrane bilayer. This is HTH-type transcriptional repressor FabR from Salmonella choleraesuis (strain SC-B67).